A 393-amino-acid chain; its full sequence is Selenide, water dikinase (393 aa).

The disordered stretch occupies residues 1-21 (MSEKEGKVIPETNGMKRPRFD). The active site involves cysteine 42. ATP-binding positions include lysine 45, 68-70 (GMD), aspartate 93, aspartate 116, and 167-170 (GGQT). Position 70 (aspartate 70) interacts with Mg(2+). Aspartate 116 provides a ligand contact to Mg(2+). Aspartate 273 provides a ligand contact to Mg(2+).

Belongs to the selenophosphate synthase 1 family. Class I subfamily. In terms of assembly, homodimer. Mg(2+) serves as cofactor.

It catalyses the reaction hydrogenselenide + ATP + H2O = selenophosphate + AMP + phosphate + 2 H(+). Synthesizes selenophosphate from selenide and ATP. The protein is Selenide, water dikinase of Trypanosoma brucei brucei (strain 927/4 GUTat10.1).